A 592-amino-acid polypeptide reads, in one-letter code: uncharacterized protein (592 aa).

Helical transmembrane passes span 12–32 (IWIL…IFLL), 58–78 (PILF…ISLV), 102–122 (MGLF…SYYL), 191–211 (ISYT…GVEI), 214–234 (MMVF…FWLG), and 299–319 (FSGF…LIQV). The 301-residue stretch at 58-358 (PILFFLLIVA…FRSTYDNFAS (301 aa)) folds into the ABC transmembrane type-1 domain. Residues 391–592 (VIFKNLSIQN…LQDKGQWQVL (202 aa)) enclose the ABC transporter domain. 424–431 (GKSGAGKT) serves as a coordination point for ATP.

The protein belongs to the ABC transporter superfamily.

Its subcellular location is the cell inner membrane. This is an uncharacterized protein from Haemophilus influenzae (strain ATCC 51907 / DSM 11121 / KW20 / Rd).